The primary structure comprises 373 residues: 4-hydroxy-3-methylbut-2-en-1-yl diphosphate synthase (flavodoxin) (373 aa).

Cys-270, Cys-273, Cys-305, and Glu-312 together coordinate [4Fe-4S] cluster.

It belongs to the IspG family. [4Fe-4S] cluster serves as cofactor.

The enzyme catalyses (2E)-4-hydroxy-3-methylbut-2-enyl diphosphate + oxidized [flavodoxin] + H2O + 2 H(+) = 2-C-methyl-D-erythritol 2,4-cyclic diphosphate + reduced [flavodoxin]. Its pathway is isoprenoid biosynthesis; isopentenyl diphosphate biosynthesis via DXP pathway; isopentenyl diphosphate from 1-deoxy-D-xylulose 5-phosphate: step 5/6. In terms of biological role, converts 2C-methyl-D-erythritol 2,4-cyclodiphosphate (ME-2,4cPP) into 1-hydroxy-2-methyl-2-(E)-butenyl 4-diphosphate. In Pectobacterium carotovorum subsp. carotovorum (strain PC1), this protein is 4-hydroxy-3-methylbut-2-en-1-yl diphosphate synthase (flavodoxin).